Consider the following 452-residue polypeptide: Trigger factor (452 aa).

One can recognise a PPIase FKBP-type domain in the interval 170 to 256 (DSIVKVDFVE…IKSIKKRDLP (87 aa)).

The protein belongs to the FKBP-type PPIase family. Tig subfamily.

It is found in the cytoplasm. The catalysed reaction is [protein]-peptidylproline (omega=180) = [protein]-peptidylproline (omega=0). Its function is as follows. Involved in protein export. Acts as a chaperone by maintaining the newly synthesized protein in an open conformation. Functions as a peptidyl-prolyl cis-trans isomerase. The chain is Trigger factor from Borreliella afzelii (strain PKo) (Borrelia afzelii).